Consider the following 317-residue polypeptide: Acetyl-coenzyme A carboxylase carboxyl transferase subunit alpha (317 aa).

In terms of domain architecture, CoA carboxyltransferase C-terminal spans 37–291 (KLQEKVDKLL…GNAIEDALDD (255 aa)).

It belongs to the AccA family. As to quaternary structure, acetyl-CoA carboxylase is a heterohexamer composed of biotin carboxyl carrier protein (AccB), biotin carboxylase (AccC) and two subunits each of ACCase subunit alpha (AccA) and ACCase subunit beta (AccD).

The protein localises to the cytoplasm. The catalysed reaction is N(6)-carboxybiotinyl-L-lysyl-[protein] + acetyl-CoA = N(6)-biotinyl-L-lysyl-[protein] + malonyl-CoA. It functions in the pathway lipid metabolism; malonyl-CoA biosynthesis; malonyl-CoA from acetyl-CoA: step 1/1. Component of the acetyl coenzyme A carboxylase (ACC) complex. First, biotin carboxylase catalyzes the carboxylation of biotin on its carrier protein (BCCP) and then the CO(2) group is transferred by the carboxyltransferase to acetyl-CoA to form malonyl-CoA. The polypeptide is Acetyl-coenzyme A carboxylase carboxyl transferase subunit alpha (Rhodospirillum centenum (strain ATCC 51521 / SW)).